A 327-amino-acid chain; its full sequence is Undecaprenyl-phosphate 4-deoxy-4-formamido-L-arabinose transferase (327 aa).

The next 2 helical transmembrane spans lie at 235–255 and 270–290; these read LLSL…VLLV and VFTL…GMGL.

The protein belongs to the glycosyltransferase 2 family.

The protein resides in the cell inner membrane. The enzyme catalyses UDP-4-deoxy-4-formamido-beta-L-arabinose + di-trans,octa-cis-undecaprenyl phosphate = 4-deoxy-4-formamido-alpha-L-arabinopyranosyl di-trans,octa-cis-undecaprenyl phosphate + UDP. It functions in the pathway glycolipid biosynthesis; 4-amino-4-deoxy-alpha-L-arabinose undecaprenyl phosphate biosynthesis; 4-amino-4-deoxy-alpha-L-arabinose undecaprenyl phosphate from UDP-4-deoxy-4-formamido-beta-L-arabinose and undecaprenyl phosphate: step 1/2. The protein operates within bacterial outer membrane biogenesis; lipopolysaccharide biosynthesis. Functionally, catalyzes the transfer of 4-deoxy-4-formamido-L-arabinose from UDP to undecaprenyl phosphate. The modified arabinose is attached to lipid A and is required for resistance to polymyxin and cationic antimicrobial peptides. This chain is Undecaprenyl-phosphate 4-deoxy-4-formamido-L-arabinose transferase, found in Yersinia pestis bv. Antiqua (strain Antiqua).